A 416-amino-acid polypeptide reads, in one-letter code: Glutamyl-tRNA reductase (416 aa).

Substrate is bound by residues 49-52 (TCNR), Ser-105, 110-112 (EPQ), and Gln-116. Cys-50 (nucleophile) is an active-site residue. Residue 185–190 (GAGETI) participates in NADP(+) binding.

This sequence belongs to the glutamyl-tRNA reductase family. In terms of assembly, homodimer.

The enzyme catalyses (S)-4-amino-5-oxopentanoate + tRNA(Glu) + NADP(+) = L-glutamyl-tRNA(Glu) + NADPH + H(+). The protein operates within porphyrin-containing compound metabolism; protoporphyrin-IX biosynthesis; 5-aminolevulinate from L-glutamyl-tRNA(Glu): step 1/2. Functionally, catalyzes the NADPH-dependent reduction of glutamyl-tRNA(Glu) to glutamate 1-semialdehyde (GSA). The polypeptide is Glutamyl-tRNA reductase (Shewanella putrefaciens (strain CN-32 / ATCC BAA-453)).